Reading from the N-terminus, the 112-residue chain is Nucleoid-associated protein RER_03900 (112 aa).

Belongs to the YbaB/EbfC family. As to quaternary structure, homodimer.

Its subcellular location is the cytoplasm. The protein resides in the nucleoid. Its function is as follows. Binds to DNA and alters its conformation. May be involved in regulation of gene expression, nucleoid organization and DNA protection. The sequence is that of Nucleoid-associated protein RER_03900 from Rhodococcus erythropolis (strain PR4 / NBRC 100887).